The sequence spans 311 residues: Methionyl-tRNA formyltransferase (311 aa).

109–112 provides a ligand contact to (6S)-5,6,7,8-tetrahydrofolate; that stretch reads SLLP.

This sequence belongs to the Fmt family.

The catalysed reaction is L-methionyl-tRNA(fMet) + (6R)-10-formyltetrahydrofolate = N-formyl-L-methionyl-tRNA(fMet) + (6S)-5,6,7,8-tetrahydrofolate + H(+). Functionally, attaches a formyl group to the free amino group of methionyl-tRNA(fMet). The formyl group appears to play a dual role in the initiator identity of N-formylmethionyl-tRNA by promoting its recognition by IF2 and preventing the misappropriation of this tRNA by the elongation apparatus. In Moorella thermoacetica (strain ATCC 39073 / JCM 9320), this protein is Methionyl-tRNA formyltransferase.